Reading from the N-terminus, the 214-residue chain is Protein OPG034 (214 aa).

Belongs to the orthopoxvirus OPG034 family.

The protein is Protein OPG034 (OPG034) of Monkeypox virus.